A 346-amino-acid chain; its full sequence is Elongation factor Ts (346 aa).

The segment at 80 to 83 (TDFV) is involved in Mg(2+) ion dislocation from EF-Tu.

This sequence belongs to the EF-Ts family.

The protein localises to the cytoplasm. In terms of biological role, associates with the EF-Tu.GDP complex and induces the exchange of GDP to GTP. It remains bound to the aminoacyl-tRNA.EF-Tu.GTP complex up to the GTP hydrolysis stage on the ribosome. In Streptococcus agalactiae serotype Ia (strain ATCC 27591 / A909 / CDC SS700), this protein is Elongation factor Ts.